The chain runs to 285 residues: Bifunctional protein FolD (285 aa).

NADP(+) contacts are provided by residues 166 to 168 and isoleucine 232; that span reads GAS.

This sequence belongs to the tetrahydrofolate dehydrogenase/cyclohydrolase family. Homodimer.

The enzyme catalyses (6R)-5,10-methylene-5,6,7,8-tetrahydrofolate + NADP(+) = (6R)-5,10-methenyltetrahydrofolate + NADPH. It carries out the reaction (6R)-5,10-methenyltetrahydrofolate + H2O = (6R)-10-formyltetrahydrofolate + H(+). Its pathway is one-carbon metabolism; tetrahydrofolate interconversion. Catalyzes the oxidation of 5,10-methylenetetrahydrofolate to 5,10-methenyltetrahydrofolate and then the hydrolysis of 5,10-methenyltetrahydrofolate to 10-formyltetrahydrofolate. The protein is Bifunctional protein FolD of Psychromonas ingrahamii (strain DSM 17664 / CCUG 51855 / 37).